A 66-amino-acid chain; its full sequence is DNA gyrase inhibitor YacG (66 aa).

Zn(2+) is bound by residues cysteine 10, cysteine 13, cysteine 29, and cysteine 33.

The protein belongs to the DNA gyrase inhibitor YacG family. In terms of assembly, interacts with GyrB. Zn(2+) serves as cofactor.

Functionally, inhibits all the catalytic activities of DNA gyrase by preventing its interaction with DNA. Acts by binding directly to the C-terminal domain of GyrB, which probably disrupts DNA binding by the gyrase. The sequence is that of DNA gyrase inhibitor YacG from Edwardsiella ictaluri (strain 93-146).